The chain runs to 747 residues: Pseudouridine-metabolizing bifunctional protein C1861.05 (747 aa).

The pseudouridine-5'-phosphate glycosidase stretch occupies residues Met1–Ser379. Residue Glu61 is the Proton donor; for PsiMP glycosidase activity of the active site. Lys123 and Val143 together coordinate substrate. Mn(2+) is bound at residue Asp175. Ser177–Asp179 provides a ligand contact to substrate. The active-site Nucleophile; for PsiMP glycosidase activity is Lys196. The segment at Lys380–Lys747 is pseudouridine kinase.

The protein in the N-terminal section; belongs to the pseudouridine-5'-phosphate glycosidase family. In the C-terminal section; belongs to the carbohydrate kinase PfkB family. Mn(2+) serves as cofactor.

The protein localises to the cytoplasm. The catalysed reaction is D-ribose 5-phosphate + uracil = psi-UMP + H2O. The enzyme catalyses pseudouridine + ATP = psi-UMP + ADP + H(+). Its function is as follows. Bifunctional enzyme that catalyzes the phosphorylation of pseudouridine to pseudouridine 5'-phosphate (PsiMP), and the reversible cleavage of pseudouridine 5'-phosphate to ribose 5-phosphate and uracil. Is involved in a pseudouridine degradation pathway. The chain is Pseudouridine-metabolizing bifunctional protein C1861.05 from Schizosaccharomyces pombe (strain 972 / ATCC 24843) (Fission yeast).